A 247-amino-acid polypeptide reads, in one-letter code: Probable transcriptional regulatory protein lpp1249 (247 aa).

This sequence belongs to the TACO1 family.

It is found in the cytoplasm. The chain is Probable transcriptional regulatory protein lpp1249 from Legionella pneumophila (strain Paris).